Here is a 419-residue protein sequence, read N- to C-terminus: Putative nucleobase-ascorbate transporter 9 (419 aa).

Gly residues predominate over residues 1–22; it reads MANGAGNGGGGAGGNGGGGNNG. The tract at residues 1–28 is disordered; sequence MANGAGNGGGGAGGNGGGGNNGAGNRAE. Transmembrane regions (helical) follow at residues 64–84, 91–111, 113–133, 153–173, 184–204, 220–240, 273–293, 313–333, 334–354, and 370–390; these read LLSLGITVLIPSLLVPLMGGG, VIQTLLFVSGLTTLFQSFFGT, LPVIASASYAYIIPITSIIYS, IQGALIITGCFQVLVCFLGVW, SIAPLVTFTGLGLYHIGFPLV, GMMLCIPVVWLFAQLLTSSGV, SFAMMAASFVTLFESTGLFYA, RVIQISAAFMLFFSIFGKFGA, FFASIPLPIMASLYCIVLCFV, and FNTKFILGFSFFMAISIPQYF.

This sequence belongs to the nucleobase:cation symporter-2 (NCS2) (TC 2.A.40) family.

The protein resides in the membrane. The chain is Putative nucleobase-ascorbate transporter 9 (NAT9) from Arabidopsis thaliana (Mouse-ear cress).